Consider the following 339-residue polypeptide: N-acetylornithine carbamoyltransferase (339 aa).

Residues 49–52 (SMRT), tryptophan 77, and arginine 112 each bind carbamoyl phosphate. Glutamate 144 is a N(2)-acetyl-L-ornithine binding site. A carbamoyl phosphate-binding site is contributed by 148 to 151 (HPCQ). The N(2)-acetyl-L-ornithine site is built by lysine 252 and leucine 295. Carbamoyl phosphate is bound at residue 294–295 (CL). Lysine 302 is modified (N6-carboxylysine). Arginine 322 serves as a coordination point for carbamoyl phosphate.

This sequence belongs to the aspartate/ornithine carbamoyltransferase superfamily. AOTCase family. Homotrimer.

It localises to the cytoplasm. It carries out the reaction N(2)-acetyl-L-ornithine + carbamoyl phosphate = N(2)-acetyl-L-citrulline + phosphate + H(+). It functions in the pathway amino-acid biosynthesis; L-arginine biosynthesis. Its activity is regulated as follows. Carboxylation at Lys-302 increases the catalytic activity of the enzyme. Is potently inhibited by N(alpha)-acetyl-N(delta)-phosphonoacetyl-L-ornithine (PALAO). In terms of biological role, catalyzes the transfer of the carbamoyl group from carbamoyl phosphate to the delta-amino group of N(2)-acetyl-L-ornithine to produce N(2)-acetyl-L-citrulline. This is a step in an alternative arginine biosynthesis pathway. The enzyme has no activity with ornithine. In Xanthomonas campestris pv. campestris (strain ATCC 33913 / DSM 3586 / NCPPB 528 / LMG 568 / P 25), this protein is N-acetylornithine carbamoyltransferase.